A 194-amino-acid polypeptide reads, in one-letter code: 7-methyl-GTP pyrophosphatase (194 aa).

D69 (proton acceptor) is an active-site residue.

The protein belongs to the Maf family. YceF subfamily. It depends on a divalent metal cation as a cofactor.

It localises to the cytoplasm. It carries out the reaction N(7)-methyl-GTP + H2O = N(7)-methyl-GMP + diphosphate + H(+). Nucleoside triphosphate pyrophosphatase that hydrolyzes 7-methyl-GTP (m(7)GTP). May have a dual role in cell division arrest and in preventing the incorporation of modified nucleotides into cellular nucleic acids. The protein is 7-methyl-GTP pyrophosphatase (yceF1) of Salmonella choleraesuis (strain SC-B67).